The following is a 1343-amino-acid chain: DNA-directed RNA polymerase subunit beta (1343 aa).

The protein belongs to the RNA polymerase beta chain family. In terms of assembly, the RNAP catalytic core consists of 2 alpha, 1 beta, 1 beta' and 1 omega subunit. When a sigma factor is associated with the core the holoenzyme is formed, which can initiate transcription.

It carries out the reaction RNA(n) + a ribonucleoside 5'-triphosphate = RNA(n+1) + diphosphate. In terms of biological role, DNA-dependent RNA polymerase catalyzes the transcription of DNA into RNA using the four ribonucleoside triphosphates as substrates. This is DNA-directed RNA polymerase subunit beta from Shewanella baltica (strain OS155 / ATCC BAA-1091).